A 323-amino-acid chain; its full sequence is Peroxisomal and mitochondrial division factor 2 (323 aa).

3 disordered regions span residues 1-55, 73-92, and 120-143; these read MAEE…NDAI, ESKA…KSDE, and TART…SQKG. Over 1-297 the chain is Cytoplasmic; that stretch reads MAEERSLNGE…WSPNVTAVGS (297 aa). Positions 13–26 are enriched in acidic residues; the sequence is GQDDESFFDSDQQG. Positions 28–278 form a coiled coil; the sequence is DGKSTELNQK…INGLKNVVEE (251 aa). A helical membrane pass occupies residues 298-318; that stretch reads GGAVAAVAVAVAGAAVVCYIY. Residues 319–323 are Mitochondrial intermembrane-facing; that stretch reads HSRRV.

As to quaternary structure, homodimer. Interacts with PMD1.

It localises to the mitochondrion outer membrane. Functionally, involved in morphogenesis and proliferation of mitochondria. Does not act redundantly with PMD1. Is not involved in peroxisomal proliferation. The sequence is that of Peroxisomal and mitochondrial division factor 2 from Arabidopsis thaliana (Mouse-ear cress).